The following is a 424-amino-acid chain: 5,5'-dehydrodivanillate O-demethylase oxygenase subunit (424 aa).

One can recognise a Rieske domain in the interval 27–135 (WHPIGGESEF…VRALGGLLWA (109 aa)). [2Fe-2S] cluster is bound by residues Cys-68, His-70, Cys-87, and His-90. His-181, His-186, and Asp-306 together coordinate Fe cation.

This sequence belongs to the bacterial ring-hydroxylating dioxygenase alpha subunit family. In terms of assembly, homotrimer. The three-component monooxygenase is composed of an oxygenase (LigXa), a ferredoxin (LigXc) and a ferredoxin reductase (LigXd). [2Fe-2S] cluster is required as a cofactor. It depends on Fe cation as a cofactor.

It carries out the reaction 5,5'-dehydrodivanillate + NADH + O2 + H(+) = 2,2',3-trihydroxy-3'-methoxy-5,5'-dicarboxybiphenyl + formaldehyde + NAD(+) + H2O. Functionally, involved in the catabolism of 5,5'-dehydrodivanillate (DDVA), an intermediate in the biodegradation of lignin. Part of a three-component monooxygenase that catalyzes the O-demethylation of DDVA, leading to the formation of 2,2',3-trihydroxy-3'-methoxy-5,5'-dicarboxybiphenyl (OH-DDVA). This Sphingobium sp. (strain NBRC 103272 / SYK-6) protein is 5,5'-dehydrodivanillate O-demethylase oxygenase subunit.